Reading from the N-terminus, the 217-residue chain is Elongation factor Ts (217 aa).

The involved in Mg(2+) ion dislocation from EF-Tu stretch occupies residues Thr-82–Val-85.

This sequence belongs to the EF-Ts family.

Its subcellular location is the cytoplasm. Functionally, associates with the EF-Tu.GDP complex and induces the exchange of GDP to GTP. It remains bound to the aminoacyl-tRNA.EF-Tu.GTP complex up to the GTP hydrolysis stage on the ribosome. In Desulfitobacterium hafniense (strain DSM 10664 / DCB-2), this protein is Elongation factor Ts.